The primary structure comprises 312 residues: MSPAAILSDVPRVLLLSPPSLSSNPDKLAELLNQYDKNTRDLQMIDRLAAGLVSLPESTYNLVLLLTDIDGTSTESERLVGRDVLQQIARTLQPGGIMKYHDGLSAMIKEPARTEAILSGLIANDKGELVKPVFEEQSVLLPFSINRSQKSIKGININKSDQQPAILQKNIVTLTNNTNDIFNGLEGDDDELIDEDELINEDELERPIIQPPECRPKAGKRRRACKDCTCGLAQKLEAEDKRQRANADEKLSALKLNSGEIAEVDFTIQGKTGSCGNCSLGDAFRCDGCPYIGLPPFKPGEEVKLFDNDVQL.

The tract at residues 7–139 is N-terminal SAM-like domain; the sequence is LSDVPRVLLL…VKPVFEEQSV (133 aa). Residues 140 to 204 are linker; the sequence is LLPFSINRSQ…EDELINEDEL (65 aa). [2Fe-2S] cluster is bound by residues Cys214, Cys225, Cys228, and Cys230. Residues 214–230 form a fe-S binding site A region; it reads CRPKAGKRRRACKDCTC. [4Fe-4S] cluster is bound by residues Cys275, Cys278, Cys286, and Cys289. 2 consecutive short sequence motifs (cx2C motif) follow at residues 275-278 and 286-289; these read CGNC and CDGC. The tract at residues 275–289 is fe-S binding site B; sequence CGNCSLGDAFRCDGC.

This sequence belongs to the anamorsin family. In terms of assembly, monomer. Interacts with TAH18. Interacts with MIA40. Requires [2Fe-2S] cluster as cofactor. [4Fe-4S] cluster is required as a cofactor.

The protein resides in the cytoplasm. Its subcellular location is the mitochondrion intermembrane space. In terms of biological role, component of the cytosolic iron-sulfur (Fe-S) protein assembly (CIA) machinery required for the maturation of extramitochondrial Fe-S proteins. Part of an electron transfer chain functioning in an early step of cytosolic Fe-S biogenesis, facilitating the de novo assembly of a [4Fe-4S] cluster on the scaffold complex CFD1-NBP35. Electrons are transferred to DRE2 from NADPH via the FAD- and FMN-containing protein TAH18. TAH18-DRE2 are also required for the assembly of the diferric tyrosyl radical cofactor of ribonucleotide reductase (RNR), probably by providing electrons for reduction during radical cofactor maturation in the catalytic small subunit RNR2. This is Fe-S cluster assembly protein DRE2 from Arthroderma otae (strain ATCC MYA-4605 / CBS 113480) (Microsporum canis).